Here is a 352-residue protein sequence, read N- to C-terminus: CRISPR-associated endonuclease Cas1 1 (352 aa).

Positions 207, 274, and 289 each coordinate Mn(2+).

It belongs to the CRISPR-associated endonuclease Cas1 family. In terms of assembly, homodimer, forms a heterotetramer with a Cas2 homodimer. Requires Mg(2+) as cofactor. The cofactor is Mn(2+).

Its function is as follows. CRISPR (clustered regularly interspaced short palindromic repeat), is an adaptive immune system that provides protection against mobile genetic elements (viruses, transposable elements and conjugative plasmids). CRISPR clusters contain spacers, sequences complementary to antecedent mobile elements, and target invading nucleic acids. CRISPR clusters are transcribed and processed into CRISPR RNA (crRNA). Acts as a dsDNA endonuclease. Involved in the integration of spacer DNA into the CRISPR cassette. The sequence is that of CRISPR-associated endonuclease Cas1 1 from Saccharolobus solfataricus (strain ATCC 35092 / DSM 1617 / JCM 11322 / P2) (Sulfolobus solfataricus).